A 228-amino-acid polypeptide reads, in one-letter code: Ribosomal RNA small subunit methyltransferase G (228 aa).

S-adenosyl-L-methionine-binding positions include Gly89, Leu94, 140 to 141 (VE), and Arg159.

The protein belongs to the methyltransferase superfamily. RNA methyltransferase RsmG family.

It is found in the cytoplasm. The enzyme catalyses guanosine(527) in 16S rRNA + S-adenosyl-L-methionine = N(7)-methylguanosine(527) in 16S rRNA + S-adenosyl-L-homocysteine. Specifically methylates the N7 position of guanine in position 527 of 16S rRNA. This chain is Ribosomal RNA small subunit methyltransferase G, found in Burkholderia multivorans (strain ATCC 17616 / 249).